The primary structure comprises 100 residues: Small ribosomal subunit protein uS14c (100 aa).

Belongs to the universal ribosomal protein uS14 family. In terms of assembly, part of the 30S ribosomal subunit.

The protein localises to the plastid. The protein resides in the chloroplast. Its function is as follows. Binds 16S rRNA, required for the assembly of 30S particles. The polypeptide is Small ribosomal subunit protein uS14c (Staurastrum punctulatum (Green alga)).